A 159-amino-acid chain; its full sequence is Style cell-cycle inhibitor 1 (159 aa).

Residues 1-86 (MVSERSSKEK…SDHKLKEGIP (86 aa)) form a disordered region. The span at 15–50 (ARSEDSSSSDYEEKVKRHRGTEKDDERRSRRSDKKD) shows a compositional bias: basic and acidic residues. A compositionally biased stretch (basic residues) spans 51 to 63 (KKSHKHHKSSTSK). A compositionally biased stretch (basic and acidic residues) spans 64 to 85 (KSKDDKPKKKHTESDHKLKEGI).

It is found in the nucleus. Component of the auxin signaling transduction pathway that regulates cell proliferation and differentiation during flowers stigmas and styles development. Involved in the regulation of auxin-related genes. This Arabidopsis thaliana (Mouse-ear cress) protein is Style cell-cycle inhibitor 1.